Reading from the N-terminus, the 264-residue chain is Thymidylate synthase (264 aa).

Arginine 21 is a dUMP binding site. Histidine 51 contributes to the (6R)-5,10-methylene-5,6,7,8-tetrahydrofolate binding site. A dUMP-binding site is contributed by 126 to 127 (RR). Cysteine 146 serves as the catalytic Nucleophile. DUMP contacts are provided by residues 166 to 169 (RSCD), asparagine 177, and 207 to 209 (HLY). Aspartate 169 contacts (6R)-5,10-methylene-5,6,7,8-tetrahydrofolate. Residue alanine 263 coordinates (6R)-5,10-methylene-5,6,7,8-tetrahydrofolate.

Belongs to the thymidylate synthase family. Bacterial-type ThyA subfamily. As to quaternary structure, homodimer.

The protein localises to the cytoplasm. The enzyme catalyses dUMP + (6R)-5,10-methylene-5,6,7,8-tetrahydrofolate = 7,8-dihydrofolate + dTMP. The protein operates within pyrimidine metabolism; dTTP biosynthesis. In terms of biological role, catalyzes the reductive methylation of 2'-deoxyuridine-5'-monophosphate (dUMP) to 2'-deoxythymidine-5'-monophosphate (dTMP) while utilizing 5,10-methylenetetrahydrofolate (mTHF) as the methyl donor and reductant in the reaction, yielding dihydrofolate (DHF) as a by-product. This enzymatic reaction provides an intracellular de novo source of dTMP, an essential precursor for DNA biosynthesis. The polypeptide is Thymidylate synthase (Salmonella typhimurium (strain LT2 / SGSC1412 / ATCC 700720)).